A 146-amino-acid polypeptide reads, in one-letter code: Ribonuclease H (146 aa).

The region spanning 1-136 (MKHIEIYTDG…CDTLAREAAL (136 aa)) is the RNase H type-1 domain. 4 residues coordinate Mg(2+): Asp9, Glu47, Asp69, and Asp128.

The protein belongs to the RNase H family. Monomer. Requires Mg(2+) as cofactor.

Its subcellular location is the cytoplasm. The enzyme catalyses Endonucleolytic cleavage to 5'-phosphomonoester.. Endonuclease that specifically degrades the RNA of RNA-DNA hybrids. This chain is Ribonuclease H, found in Campylobacter jejuni subsp. jejuni serotype O:23/36 (strain 81-176).